A 72-amino-acid chain; its full sequence is Large ribosomal subunit protein bL31 (72 aa).

4 residues coordinate Zn(2+): cysteine 16, cysteine 18, cysteine 36, and cysteine 39.

It belongs to the bacterial ribosomal protein bL31 family. Type A subfamily. In terms of assembly, part of the 50S ribosomal subunit. Requires Zn(2+) as cofactor.

Binds the 23S rRNA. The polypeptide is Large ribosomal subunit protein bL31 (Geobacter sp. (strain M21)).